Reading from the N-terminus, the 551-residue chain is Chaperonin GroEL (551 aa).

Residues 29-32 (TMGP), Lys-50, 86-90 (DGTTT), Gly-414, 478-480 (NAA), and Asp-494 contribute to the ATP site.

The protein belongs to the chaperonin (HSP60) family. As to quaternary structure, forms a cylinder of 14 subunits composed of two heptameric rings stacked back-to-back. Interacts with the co-chaperonin GroES.

It is found in the cytoplasm. It carries out the reaction ATP + H2O + a folded polypeptide = ADP + phosphate + an unfolded polypeptide.. In terms of biological role, together with its co-chaperonin GroES, plays an essential role in assisting protein folding. The GroEL-GroES system forms a nano-cage that allows encapsulation of the non-native substrate proteins and provides a physical environment optimized to promote and accelerate protein folding. This is Chaperonin GroEL from Legionella jeonii.